Consider the following 493-residue polypeptide: MWSRRQGRLRPTVCGVEELRRRRREREAALRKARREQQLVSKRLLRNDAPEEAGEGCVAAILGETEVQQFLRQAQRGTEEKEREGALVSLRRGLQHPETQQTFIRLEGSMRTLVGLLTSNQALLQLEAARCLHELSHSEQSTVAEACLPATSYLLTYLSSHSSDFIELCLYTLGNLIVESEAVRRQLLPQGIVPALAACIQSPHVAVLEALGYALSQLLQAEEAPEKIIPSILASTLPQHMLQMLQPGPKLNPGVAVEFAWCLHYIICSQVSNPLLIGHGALSTLGLLLLDLAGAVQKTEDAGLELLACPVLRCLSNLLTEAAVETVGGQMQLRDERVVAALFILLQFFFQKQPSLLPEGLWLLNNLTANSPSFCTSLLSLDLIEPLLQLLPVSNVVSVMVLTVLCNVAEKGPAYCQRLWPGPLLPALLHTLAFSDTEVVGQSLELLHLLFLYQPEAVQVFLQQSGLQALERHQEEAQLQDRVYALQQTALQG.

A coiled-coil region spans residues Gly15 to Glu84. 2 helical membrane-spanning segments follow: residues Val338 to Pro358 and Pro386 to Cys406.

The protein resides in the membrane. This Homo sapiens (Human) protein is Transmembrane and coiled-coil domain-containing protein 6 (TMCO6).